A 345-amino-acid chain; its full sequence is S-adenosylmethionine:tRNA ribosyltransferase-isomerase (345 aa).

It belongs to the QueA family. Monomer.

It localises to the cytoplasm. The enzyme catalyses 7-aminomethyl-7-carbaguanosine(34) in tRNA + S-adenosyl-L-methionine = epoxyqueuosine(34) in tRNA + adenine + L-methionine + 2 H(+). Its pathway is tRNA modification; tRNA-queuosine biosynthesis. Functionally, transfers and isomerizes the ribose moiety from AdoMet to the 7-aminomethyl group of 7-deazaguanine (preQ1-tRNA) to give epoxyqueuosine (oQ-tRNA). This is S-adenosylmethionine:tRNA ribosyltransferase-isomerase from Anaeromyxobacter dehalogenans (strain 2CP-1 / ATCC BAA-258).